The following is a 244-amino-acid chain: Eukaryotic translation initiation factor 4E type 1B (244 aa).

Over residues 1-26 the composition is skewed to basic and acidic residues; it reads MNKVEGGGHKEEVVVKEKEVVKEKPS. A disordered region spans residues 1 to 57; it reads MNKVEGGGHKEEVVVKEKEVVKEKPSEATAEGVQAGEAKDLPGSLKTQRRKAHREHP. An EIF4EBP1/2/3 binding region spans residues 65 to 68; the sequence is HPLQ. 84 to 85 provides a ligand contact to mRNA; the sequence is WQ. The segment at 101–105 is EIF4EBP1/2/3 binding; that stretch reads WAVYS. Position 130-131 (130-131) interacts with mRNA; the sequence is WE. An EIF4EBP1/2/3 binding region spans residues 160-167; sequence ETLLCLVG. MRNA-binding positions include 185 to 190 and 233 to 235; these read RTKRDK and AKS.

It belongs to the eukaryotic initiation factor 4E family. In terms of assembly, EIF4F is a multi-subunit complex, the composition of which varies with external and internal environmental conditions. It is composed of at least EIF4A, EIF4E and EIF4G.

In terms of biological role, recognizes and binds the 7-methylguanosine-containing mRNA cap during an early step in the initiation of protein synthesis and facilitates ribosome binding by inducing the unwinding of the mRNAs secondary structures. This is Eukaryotic translation initiation factor 4E type 1B (Eif4e1b) from Mus musculus (Mouse).